A 393-amino-acid chain; its full sequence is N-acyl-phosphatidylethanolamine-hydrolyzing phospholipase D (393 aa).

Methionine 1 bears the N-acetylmethionine mark. The segment covering methionine 1 to tyrosine 16 has biased composition (polar residues). A disordered region spans residues methionine 1–serine 40. Zn(2+)-binding residues include histidine 185 and histidine 187. Position 188 (tyrosine 188) interacts with an N-acyl-1,2-diacyl-sn-glycero-3-phosphoethanolamine. Zn(2+)-binding residues include aspartate 189, histidine 190, and histidine 253. Residues lysine 256 and methionine 260 each contribute to the deoxycholate site. Aspartate 284 lines the Zn(2+) pocket. Histidine 321 contacts an N-acyl-1,2-diacyl-sn-glycero-3-phosphoethanolamine. Histidine 343 serves as a coordination point for Zn(2+). Residue alanine 348 participates in deoxycholate binding.

It belongs to the NAPE-PLD family. Homodimer. Bile acids promote the assembly of inactive monomers into an active dimer and enable catalysis. The cofactor is Zn(2+). Widely expressed. Highest expression in brain, kidney and testis (at protein level). Expressed in adipose tissue (at protein level).

The protein resides in the golgi apparatus membrane. Its subcellular location is the early endosome membrane. It is found in the nucleus envelope. It localises to the nucleus. The protein localises to the nucleoplasm. It carries out the reaction an N-acyl-1,2-diacyl-sn-glycero-3-phosphoethanolamine + H2O = an N-acylethanolamine + a 1,2-diacyl-sn-glycero-3-phosphate + H(+). It catalyses the reaction N-butanoyl-1-hexadecanoyl-2-(9Z,12Z-octadecadienoyl)-sn-glycero-3-phosphoethanolamine + H2O = N-butanoyl ethanolamine + 1-hexadecanoyl-2-(9Z,12Z-octadecadienoyl)-sn-glycero-3-phosphate + H(+). The catalysed reaction is N-hexanoyl-1-hexadecanoyl-2-(9Z,12Z-octadecadienoyl)-sn-glycero-3-phosphoethanolamine + H2O = N-hexanoyl ethanolamine + 1-hexadecanoyl-2-(9Z,12Z-octadecadienoyl)-sn-glycero-3-phosphate + H(+). The enzyme catalyses N-octanoyl-1-hexadecanoyl-2-(9Z,12Z-octadecadienoyl)-sn-glycero-3-phosphoethanolamine + H2O = N-octanoyl ethanolamine + 1-hexadecanoyl-2-(9Z,12Z-octadecadienoyl)-sn-glycero-3-phosphate + H(+). It carries out the reaction N-decanoyl-1-hexadecanoyl-2-(9Z,12Z-octadecadienoyl)-sn-glycero-3-phosphoethanolamine + H2O = N-decanoyl ethanolamine + 1-hexadecanoyl-2-(9Z,12Z-octadecadienoyl)-sn-glycero-3-phosphate + H(+). It catalyses the reaction N-dodecanoyl-1,2-di-(9Z-octadecenoyl)-sn-glycero-3-phosphoethanolamine + H2O = N-dodecanoylethanolamine + 1,2-di-(9Z-octadecenoyl)-sn-glycero-3-phosphate + H(+). The catalysed reaction is N-tetradecanoyl-1,2-di-(9Z-octadecenoyl)-sn-glycero-3-phosphoethanolamine + H2O = N-tetradecanoylethanolamine + 1,2-di-(9Z-octadecenoyl)-sn-glycero-3-phosphate + H(+). The enzyme catalyses N-hexadecanoyl-1,2-di-(9Z-octadecenoyl)-sn-glycero-3-phosphoethanolamine + H2O = N-hexadecanoylethanolamine + 1,2-di-(9Z-octadecenoyl)-sn-glycero-3-phosphate + H(+). It carries out the reaction N,1-dihexadecanoyl-2-(9Z,12Z-octadecadienoyl)-sn-glycero-3-phosphoethanolamine + H2O = 1-hexadecanoyl-2-(9Z,12Z-octadecadienoyl)-sn-glycero-3-phosphate + N-hexadecanoylethanolamine + H(+). It catalyses the reaction N-octadecanoyl-1,2-di-(9Z-octadecenoyl)-sn-glycero-3-phosphoethanolamine + H2O = N-octadecanoyl ethanolamine + 1,2-di-(9Z-octadecenoyl)-sn-glycero-3-phosphate + H(+). The catalysed reaction is N,1,2-tri-(9Z-octadecenoyl)-sn-glycero-3-phosphoethanolamine + H2O = N-(9Z-octadecenoyl) ethanolamine + 1,2-di-(9Z-octadecenoyl)-sn-glycero-3-phosphate + H(+). The enzyme catalyses N-(5Z,8Z,11Z,14Z-eicosatetraenoyl)-1,2-diacyl-sn-glycero-3-phosphoethanolamine + H2O = N-(5Z,8Z,11Z,14Z-eicosatetraenoyl)-ethanolamine + a 1,2-diacyl-sn-glycero-3-phosphate + H(+). It carries out the reaction N-(5Z,8Z,11Z,14Z-eicosatetraenoyl)-1,2-di-(9Z-octadecenoyl)-sn-glycero-3-phosphoethanolamine + H2O = N-(5Z,8Z,11Z,14Z-eicosatetraenoyl)-ethanolamine + 1,2-di-(9Z-octadecenoyl)-sn-glycero-3-phosphate + H(+). It catalyses the reaction 1-O-(1Z-octadecenoyl)-2-(9Z-octadecenoyl)-sn-glycero-3-phospho-N-hexadecanoyl-ethanolamine + H2O = 1-O-(1Z-octadecenoyl)-2-(9Z-octadecenoyl)-sn-glycero-3-phosphate + N-hexadecanoylethanolamine + H(+). The catalysed reaction is N,1-diacyl-sn-glycero-3-phosphoethanolamine + H2O = an N-acylethanolamine + a 1-acyl-sn-glycero-3-phosphate + H(+). The enzyme catalyses N,1-dihexadecanoyl-sn-glycero-3-phosphoethanolamine + H2O = N-hexadecanoylethanolamine + 1-hexadecanoyl-sn-glycero-3-phosphate + H(+). It carries out the reaction N-(5Z,8Z,11Z,14Z-eicosatetraenoyl)-1-(9Z-octadecenoyl)-sn-glycero-3-phosphoethanolamine + H2O = N-(5Z,8Z,11Z,14Z-eicosatetraenoyl)-ethanolamine + 1-(9Z-octadecenoyl)-sn-glycero-3-phosphate + H(+). Activated by divalent cations. Activated by bile acids. Functionally, D-type phospholipase that hydrolyzes N-acyl-phosphatidylethanolamines (NAPEs) to produce bioactive N-acylethanolamines/fatty acid ethanolamides (NAEs/FAEs) and phosphatidic acid. Cleaves the terminal phosphodiester bond of diacyl- and alkenylacyl-NAPEs, primarily playing a role in the generation of long-chain saturated and monounsaturated NAEs in the brain. May control NAPE homeostasis in dopaminergic neuron membranes and regulate neuron survival, partly through RAC1 activation. As a regulator of lipid metabolism in the adipose tissue, mediates the crosstalk between adipocytes, gut microbiota and immune cells to control body temperature and weight. In particular, regulates energy homeostasis by promoting cold-induced brown or beige adipocyte differentiation program to generate heat from fatty acids and glucose. Has limited D-type phospholipase activity toward N-acyl lyso-NAPEs. This chain is N-acyl-phosphatidylethanolamine-hydrolyzing phospholipase D (NAPEPLD), found in Pongo abelii (Sumatran orangutan).